A 515-amino-acid chain; its full sequence is Nectin-1 (515 aa).

An N-terminal signal peptide occupies residues 1 to 30 (MARMGLAGAAGRWWGLALGLTAFFLPGTHT). The region spanning 31 to 141 (QVVQVNDSMY…GNRESQLNLT (111 aa)) is the Ig-like V-type domain. Residues 31 to 354 (QVVQVNDSMY…GRRAGQMPTA (324 aa)) lie on the Extracellular side of the membrane. Residues asparagine 36, asparagine 72, asparagine 139, asparagine 202, asparagine 286, asparagine 297, and asparagine 332 are each glycosylated (N-linked (GlcNAc...) asparagine). A disulfide bridge connects residues cysteine 51 and cysteine 124. 2 consecutive Ig-like C2-type domains span residues 145–243 (KPTN…TLNV) and 247–334 (PEVT…VNIT). 2 cysteine pairs are disulfide-bonded: cysteine 172/cysteine 226 and cysteine 269/cysteine 316. An interaction with FGFR region spans residues 282–299 (WTTLNGSLPKGVEAQNRT). Residues 355–375 (IIGGVAGSVLLVLIVVGGIIV) traverse the membrane as a helical segment. Over 376–515 (ALRRRRHTFK…SFISKKEWYV (140 aa)) the chain is Cytoplasmic. Residues 399–486 (YSKAGIPQHH…DGYGDRTLGY (88 aa)) form a disordered region. Residues serine 421, serine 433, and serine 434 each carry the phosphoserine modification. Tyrosine 435 is modified (phosphotyrosine). Positions 447-464 (GERKVGGPHPKYDEDAKR) are enriched in basic and acidic residues. Serine 509 is subject to Phosphoserine.

Belongs to the nectin family. Cis- and trans-homodimer. Can form trans-heterodimers with NECTIN3 and with NECTIN4. Interaction between NECTIN1 and NECTIN3 on the pre- and postsynaptic sites, respectively, initiates the formation of puncta adherentia junctions between axons and dendrites. Interacts (via cytoplasmic domain) with AFDN (via PDZ domain); this interaction recruits NECTIN1 to cadherin-based adherens junctions and provides a connection with the actin cytoskeleton. Interacts with integrin alphaV/beta3. Interacts (via Ig-like C2-type domain 2) with FGFR1, FGFR2 and FGFR3. As to quaternary structure, (Microbial infection) Interacts with herpes pseudorabies virus/PRV envelope glycoprotein D.

It localises to the cell membrane. The protein localises to the cell junction. Its subcellular location is the adherens junction. It is found in the presynaptic cell membrane. Its function is as follows. Cell adhesion molecule that promotes cell-cell contacts and plays important roles in the development of the nervous system. Acts by forming homophilic or heterophilic trans-dimers. Heterophilic interactions have been detected between NECTIN1 and NECTIN3 and between NECTIN1 and NECTIN4. Involved in axon guidance by promoting contacts between the commissural axons and the floor plate cells. Involved in synaptogegesis. Has some neurite outgrowth-promoting activity. Promotes formation of checkerboard-like cellular pattern of hair cells and supporting cells in the auditory epithelium via heterophilic interaction with NECTIN3: NECTIN1 is present in the membrane of hair cells and associates with NECTIN3 on supporting cells, thereby mediating heterotypic adhesion between these two cell types. Required for enamel mineralization. Functionally, (Microbial infection) Acts as a receptor for pseudorabies virus/PRV. The polypeptide is Nectin-1 (Mus musculus (Mouse)).